The sequence spans 315 residues: Putative carboxypeptidase RC0549 (315 aa).

Catalysis depends on S125, which acts as the Nucleophile. Residues E225 and H288 each act as charge relay system in the active site.

It belongs to the peptidase S66 family.

This is Putative carboxypeptidase RC0549 from Rickettsia conorii (strain ATCC VR-613 / Malish 7).